The sequence spans 78 residues: Exodeoxyribonuclease 7 small subunit (78 aa).

This sequence belongs to the XseB family. In terms of assembly, heterooligomer composed of large and small subunits.

It is found in the cytoplasm. It catalyses the reaction Exonucleolytic cleavage in either 5'- to 3'- or 3'- to 5'-direction to yield nucleoside 5'-phosphates.. Functionally, bidirectionally degrades single-stranded DNA into large acid-insoluble oligonucleotides, which are then degraded further into small acid-soluble oligonucleotides. This chain is Exodeoxyribonuclease 7 small subunit, found in Synechococcus sp. (strain JA-2-3B'a(2-13)) (Cyanobacteria bacterium Yellowstone B-Prime).